The chain runs to 577 residues: Proline--tRNA ligase (577 aa).

This sequence belongs to the class-II aminoacyl-tRNA synthetase family. ProS type 1 subfamily. As to quaternary structure, homodimer.

The protein resides in the cytoplasm. The enzyme catalyses tRNA(Pro) + L-proline + ATP = L-prolyl-tRNA(Pro) + AMP + diphosphate. Functionally, catalyzes the attachment of proline to tRNA(Pro) in a two-step reaction: proline is first activated by ATP to form Pro-AMP and then transferred to the acceptor end of tRNA(Pro). As ProRS can inadvertently accommodate and process non-cognate amino acids such as alanine and cysteine, to avoid such errors it has two additional distinct editing activities against alanine. One activity is designated as 'pretransfer' editing and involves the tRNA(Pro)-independent hydrolysis of activated Ala-AMP. The other activity is designated 'posttransfer' editing and involves deacylation of mischarged Ala-tRNA(Pro). The misacylated Cys-tRNA(Pro) is not edited by ProRS. The polypeptide is Proline--tRNA ligase (Thermotoga sp. (strain RQ2)).